A 487-amino-acid polypeptide reads, in one-letter code: Serine/threonine-protein phosphatase 2A activator 1 (487 aa).

2 disordered regions span residues 1 to 28 (MPMI…SSST) and 426 to 487 (GGIQ…PKPE).

The protein belongs to the PTPA-type PPIase family.

Its subcellular location is the cytoplasm. It localises to the nucleus. The catalysed reaction is [protein]-peptidylproline (omega=180) = [protein]-peptidylproline (omega=0). Its function is as follows. PPIases accelerate the folding of proteins. It catalyzes the cis-trans isomerization of proline imidic peptide bonds in oligopeptides. Acts as a regulatory subunit for PP2A-like phosphatases modulating their activity or substrate specificity, probably by inducing a conformational change in the catalytic subunit, a direct target of the PPIase. Can reactivate inactive phosphatase PP2A-phosphatase methylesterase complexes (PP2Ai) in presence of ATP and Mg(2+) by dissociating the inactive form from the complex. The polypeptide is Serine/threonine-protein phosphatase 2A activator 1 (RRD1) (Mycosarcoma maydis (Corn smut fungus)).